A 284-amino-acid chain; its full sequence is MDAIKKKMQAMKLEKDNAMDCALLCEQQARDANLRAEKAEEEARSLQKKIQQIENDLDQTMEQLMQVNAKLDEKDKALQNAESEVAALNRRIQLLEEDLERSEERLATATAKLAEASQAVDESERARKILESKGLADEERMDALENQLKEARFMAEEADKKYDEVARKLAMVEADLERAEERAESGESKIVELEEELRVVGNNLKSLEVSEEKANLREEEYKQQIKTLTTRLKEAEARAEFAERSVQKLQKEVDRLEDELVHEKEKYKFICDDLDMTFTELAGY.

Positions 22–266 (ALLCEQQARD…EDELVHEKEK (245 aa)) form a coiled coil.

It belongs to the tropomyosin family. In terms of assembly, homodimer.

Functionally, tropomyosin, in association with the troponin complex, plays a central role in the calcium dependent regulation of muscle contraction. The chain is Tropomyosin Per a 7.0101 from Periplaneta americana (American cockroach).